We begin with the raw amino-acid sequence, 214 residues long: Phosphatidylcholine transfer protein (214 aa).

Residue Met-1 is modified to N-acetylmethionine. An START domain is found at 1–212 (MAGAACCFSD…MVKACQNYHK (212 aa)). Residues Tyr-72 and Arg-78 each contribute to the a 1,2-diacyl-sn-glycero-3-phosphocholine site. Ser-139 carries the post-translational modification Phosphoserine. Residue Gln-157 participates in a 1,2-diacyl-sn-glycero-3-phosphocholine binding.

Interacts with ACOT13/THEM2. As to expression, abundant in liver of pups but levels in liver decrease 10-fold about 2 weeks after birth. In adult, highly expressed in epididymis, testis, kidney and bone-marrow derived mast cells.

Its subcellular location is the cytoplasm. In terms of biological role, catalyzes the transfer of phosphatidylcholine between membranes. Binds a single lipid molecule. The sequence is that of Phosphatidylcholine transfer protein (Pctp) from Mus musculus (Mouse).